A 312-amino-acid polypeptide reads, in one-letter code: 4-hydroxyproline 2-epimerase (312 aa).

Cysteine 88 (proton acceptor) is an active-site residue. Substrate-binding positions include 89–90, histidine 208, and aspartate 234; that span reads GH. The Proton donor role is filled by cysteine 238. 239–240 provides a ligand contact to substrate; it reads GT.

Belongs to the proline racemase family.

The catalysed reaction is trans-4-hydroxy-L-proline = cis-4-hydroxy-D-proline. Catalyzes the epimerization of trans-4-hydroxy-L-proline (t4LHyp) to cis-4-hydroxy-D-proline (c4DHyp). Is likely involved in a degradation pathway that converts t4LHyp to alpha-ketoglutarate. Can also catalyze the epimerization of trans-3-hydroxy-L-proline (t3LHyp) to cis-3-hydroxy-D-proline (c3DHyp), albeit with 500-fold lower efficiency. Displays no proline racemase activity. The sequence is that of 4-hydroxyproline 2-epimerase from Xanthomonas campestris pv. campestris (strain ATCC 33913 / DSM 3586 / NCPPB 528 / LMG 568 / P 25).